The sequence spans 355 residues: uncharacterized protein (355 aa).

3 consecutive transmembrane segments (helical) span residues 275-295, 301-321, and 330-350; these read SLIV…FVAF, WNSI…VVGV, and IAST…PLAL.

This sequence to M.tuberculosis Rv0497.

It localises to the cell membrane. This is an uncharacterized protein from Mycobacterium leprae (strain TN).